A 193-amino-acid polypeptide reads, in one-letter code: Leucyl/phenylalanyl-tRNA--protein transferase (193 aa).

Belongs to the L/F-transferase family.

It is found in the cytoplasm. The enzyme catalyses N-terminal L-lysyl-[protein] + L-leucyl-tRNA(Leu) = N-terminal L-leucyl-L-lysyl-[protein] + tRNA(Leu) + H(+). The catalysed reaction is N-terminal L-arginyl-[protein] + L-leucyl-tRNA(Leu) = N-terminal L-leucyl-L-arginyl-[protein] + tRNA(Leu) + H(+). It catalyses the reaction L-phenylalanyl-tRNA(Phe) + an N-terminal L-alpha-aminoacyl-[protein] = an N-terminal L-phenylalanyl-L-alpha-aminoacyl-[protein] + tRNA(Phe). Its function is as follows. Functions in the N-end rule pathway of protein degradation where it conjugates Leu, Phe and, less efficiently, Met from aminoacyl-tRNAs to the N-termini of proteins containing an N-terminal arginine or lysine. In Akkermansia muciniphila (strain ATCC BAA-835 / DSM 22959 / JCM 33894 / BCRC 81048 / CCUG 64013 / CIP 107961 / Muc), this protein is Leucyl/phenylalanyl-tRNA--protein transferase.